Consider the following 124-residue polypeptide: Small ribosomal subunit protein bS6 (124 aa).

The protein belongs to the bacterial ribosomal protein bS6 family.

In terms of biological role, binds together with bS18 to 16S ribosomal RNA. The sequence is that of Small ribosomal subunit protein bS6 from Campylobacter lari (strain RM2100 / D67 / ATCC BAA-1060).